Consider the following 98-residue polypeptide: Putative protein adenylyltransferase MJ0128 (98 aa).

Positions 31-45 match the GSX(10)DXD motif motif; it reads GSYARNEQTEKSDID. Mg(2+) contacts are provided by D43, D45, and D75.

This sequence belongs to the MntA antitoxin family. Probably forms a complex with cognate toxin MJ0127. Mg(2+) is required as a cofactor.

The catalysed reaction is L-tyrosyl-[protein] + ATP = O-(5'-adenylyl)-L-tyrosyl-[protein] + diphosphate. It catalyses the reaction O-(5'-adenylyl)-L-tyrosyl-[protein] + ATP = O-[5'-(adenylyl-(5'-&gt;3')-adenylyl)]-L-tyrosyl-[protein] + diphosphate. Its function is as follows. Probable antitoxin component of a putative type VII toxin-antitoxin (TA) system. Neutralizes cognate toxic MJ0127 by di-AMPylation. The sequence is that of Putative protein adenylyltransferase MJ0128 from Methanocaldococcus jannaschii (strain ATCC 43067 / DSM 2661 / JAL-1 / JCM 10045 / NBRC 100440) (Methanococcus jannaschii).